A 173-amino-acid polypeptide reads, in one-letter code: Photosystem I assembly protein Ycf3 (173 aa).

TPR repeat units follow at residues Ala35 to Pro68, Ser72 to Met105, and Ala113 to Ala146.

Belongs to the Ycf3 family.

The protein localises to the cellular thylakoid membrane. In terms of biological role, essential for the assembly of the photosystem I (PSI) complex. May act as a chaperone-like factor to guide the assembly of the PSI subunits. The chain is Photosystem I assembly protein Ycf3 from Thermosynechococcus vestitus (strain NIES-2133 / IAM M-273 / BP-1).